We begin with the raw amino-acid sequence, 413 residues long: Heparan-sulfate 6-O-sulfotransferase 1-A (413 aa).

Residues 9 to 15 are Cytoplasmic-facing; that stretch reads MVERSSK. A helical; Signal-anchor for type II membrane protein membrane pass occupies residues 16 to 36; sequence FLFIVVGSVLFMLILYQYVAP. The Lumenal portion of the chain corresponds to 37–413; sequence GMMNFGSPHG…DYMNHIINRW (377 aa). Residue 92–100 coordinates 3'-phosphoadenylyl sulfate; the sequence is HIQKTGGTT. Substrate is bound by residues 122-123, arginine 139, tryptophan 144, and histidine 149; that span reads KK. Histidine 149 acts as the Proton acceptor in catalysis. Residues arginine 183 and serine 191 each contribute to the 3'-phosphoadenylyl sulfate site. Substrate contacts are provided by histidine 195 and tryptophan 202. Residue asparagine 262 is glycosylated (N-linked (GlcNAc...) asparagine). 315-317 contacts 3'-phosphoadenylyl sulfate; the sequence is MQY. N-linked (GlcNAc...) asparagine glycosylation is present at asparagine 318. 321-322 contacts 3'-phosphoadenylyl sulfate; the sequence is RA. Asparagine 329 carries an N-linked (GlcNAc...) asparagine glycan. Residues 374–401 are disordered; sequence PLFPFRRTSSSDSTFRDDAPESEGSRLP.

Belongs to the sulfotransferase 6 family. In terms of tissue distribution, during somitogenesis, first expressed in polster and presumptive forebrain. During mid-somitogenesis, expressed in eye, hindbrain and anterior spinal cord. During late somitogenesis, strong expression in eye and hindbrain, decreased levels in midbrain and anterior spinal cord. At 24 hours post-fertilization (hpf), expressed in neural retina and lens, brain and anterior spinal cord. At 36 hpf, retinal expression is confined to the ciliary marginal zone and there is strong expression in tectum, rhombomeres and otic vesicle. At 48 hpf, expressed in retinal ganglion cells and in tectum, rhombomeres and pectoral fin. Not detected in the vasculature during embryogenesis.

Its subcellular location is the membrane. The enzyme catalyses alpha-D-glucosaminyl-[heparan sulfate](n) + 3'-phosphoadenylyl sulfate = 6-sulfo-alpha-D-glucosaminyl-[heparan sulfate](n) + adenosine 3',5'-bisphosphate + H(+). Its function is as follows. 6-O-sulfation enzyme which catalyzes the transfer of sulfate from 3'-phosphoadenosine 5'-phosphosulfate (PAPS) to position 6 of the N-sulfoglucosamine residue (GlcNS) of heparan sulfate. The polypeptide is Heparan-sulfate 6-O-sulfotransferase 1-A (Danio rerio (Zebrafish)).